A 306-amino-acid polypeptide reads, in one-letter code: Curved DNA-binding protein (306 aa).

Residues 5 to 69 (DYYAIMGVKP…QRRAEYDQMW (65 aa)) form the J domain.

The protein resides in the cytoplasm. The protein localises to the nucleoid. DNA-binding protein that preferentially recognizes a curved DNA sequence. It is probably a functional analog of DnaJ; displays overlapping activities with DnaJ, but functions under different conditions, probably acting as a molecular chaperone in an adaptive response to environmental stresses other than heat shock. Lacks autonomous chaperone activity; binds native substrates and targets them for recognition by DnaK. Its activity is inhibited by the binding of CbpM. The protein is Curved DNA-binding protein of Escherichia coli O8 (strain IAI1).